A 5104-amino-acid chain; its full sequence is Malformin synthetase mlfA (5104 aa).

Residues 225 to 616 (ERHAVNRPHS…CGRADTQVKL (392 aa)) are adenylation 1. One can recognise a Carrier 1 domain in the interval 757-830 (SRLEQEIQLA…EAASLAEVQE (74 aa)). Position 791 is an O-(pantetheine 4'-phosphoryl)serine (Ser-791). Residues 868–1299 (EDVFPCTTMQ…ALNTLSLLQA (432 aa)) are condensation 1. The segment at 1327-1716 (DRWVTRQPEG…GRKDTQVKLR (390 aa)) is adenylation 2. The region spanning 1854-1931 (TPASELERTL…QLAAEFGGPA (78 aa)) is the Carrier 2 domain. Ser-1891 carries the post-translational modification O-(pantetheine 4'-phosphoryl)serine. Disordered regions lie at residues 1928–1961 (GGPAGQSASSASSTTEERFTFSTPDDSSTNDGVD) and 1998–2025 (TNKTPSVSSSSSSSSSSEKKKKAAKVDS). Composition is skewed to low complexity over residues 1934–1958 (SASSASSTTEERFTFSTPDDSSTND) and 2003–2013 (SVSSSSSSSSS). Positions 2066 to 2481 (EDIYPATPLQ…TVSYSDKEAL (416 aa)) are condensation 2. The adenylation 3 stretch occupies residues 2504-2896 (VRTPHAPAVC…IGRRDGQLKL (393 aa)). The Carrier 3 domain occupies 3032-3108 (RPVTSQEREM…QLICHLNTIR (77 aa)). At Ser-3069 the chain carries O-(pantetheine 4'-phosphoryl)serine. 2 condensation regions span residues 3125–3590 (WVAL…TYDQ) and 3611–4029 (NIYP…EQLV). The segment at 4054 to 4444 (HSSREAVCAW…VGRKDNQIKF (391 aa)) is adenylation 4. Residues 4578–4654 (MPSTAAERKM…DLSDQARSLI (77 aa)) form the Carrier 4 domain. An O-(pantetheine 4'-phosphoryl)serine modification is found at Ser-4615. Positions 4691–5018 (DVLPTTSFQR…LQTIVQHQNN (328 aa)) are condensation 5.

The protein belongs to the NRP synthetase family.

The protein operates within secondary metabolite biosynthesis. In terms of biological role, nonribosomal peptide synthetase; part of the gene cluster that mediates the biosynthesis of malformins, cyclic pentapeptides with a disulfide bond between 2 consecutive cysteins, that show potential anti-tumor as well as antimalarial and antitrypanosomal properties. The nonribosomal peptide synthetase mlfA is responsible of the formation of the cyclic pentapeptide. The malformin biosynthesis clusters in malformin-producing fungi also contain enzymes involved in the formation of the disulfide bond between the two consecutive cysteins within malformins, in addition to additional tailoring enzymes such as methyltransferases or oxidoreductases. They are also composed of up to 4 major facilitator superfamily transporters, and transcription factors probably involved in the regulation of the expression of those clusters. The chain is Malformin synthetase mlfA from Aspergillus vadensis (strain CBS 113365 / IMI 142717 / IBT 24658).